The primary structure comprises 257 residues: Adenylate kinase (257 aa).

52 to 57 (GAGKGT) is a binding site for ATP. Residues 72–101 (ATGDMLRSQVAKKTELGKEAKKIMDQGGLV) form an NMP region. Residues Thr73, Arg78, 99–101 (GLV), 128–131 (GFPR), and Gln135 contribute to the AMP site. An LID region spans residues 169-206 (GRLVHPASGRSYHKIFNPPKNEMLDDITGEPLIQRSDD). Residues Arg170 and 179–180 (SY) contribute to the ATP site. Residues Arg203 and Arg214 each contribute to the AMP site. An ATP-binding site is contributed by Gln242.

The protein belongs to the adenylate kinase family. AK2 subfamily. In terms of assembly, monomer.

The protein resides in the cytoplasm. It localises to the cytosol. Its subcellular location is the mitochondrion intermembrane space. The enzyme catalyses AMP + ATP = 2 ADP. In terms of biological role, catalyzes the reversible transfer of the terminal phosphate group between ATP and AMP. Plays an important role in cellular energy homeostasis and in adenine nucleotide metabolism. Adenylate kinase activity is critical for regulation of the phosphate utilization and the AMP de novo biosynthesis pathways. The polypeptide is Adenylate kinase (adk1) (Aspergillus clavatus (strain ATCC 1007 / CBS 513.65 / DSM 816 / NCTC 3887 / NRRL 1 / QM 1276 / 107)).